Reading from the N-terminus, the 510-residue chain is Probable lysine--tRNA ligase, cytoplasmic (510 aa).

This sequence belongs to the class-II aminoacyl-tRNA synthetase family. In terms of assembly, homodimer.

The protein localises to the cytoplasm. It catalyses the reaction tRNA(Lys) + L-lysine + ATP = L-lysyl-tRNA(Lys) + AMP + diphosphate. This chain is Probable lysine--tRNA ligase, cytoplasmic, found in Encephalitozoon cuniculi (strain GB-M1) (Microsporidian parasite).